Consider the following 944-residue polypeptide: Bifunctional glutamine synthetase adenylyltransferase/adenylyl-removing enzyme (944 aa).

The tract at residues 1 to 440 (MSANSVFQQL…IFTQLIGEDD (440 aa)) is adenylyl removase. The adenylyl transferase stretch occupies residues 448–944 (VSEFKRLWLL…LSSKQKWLDE (497 aa)).

Belongs to the GlnE family. It depends on Mg(2+) as a cofactor.

The catalysed reaction is [glutamine synthetase]-O(4)-(5'-adenylyl)-L-tyrosine + phosphate = [glutamine synthetase]-L-tyrosine + ADP. It carries out the reaction [glutamine synthetase]-L-tyrosine + ATP = [glutamine synthetase]-O(4)-(5'-adenylyl)-L-tyrosine + diphosphate. Involved in the regulation of glutamine synthetase GlnA, a key enzyme in the process to assimilate ammonia. When cellular nitrogen levels are high, the C-terminal adenylyl transferase (AT) inactivates GlnA by covalent transfer of an adenylyl group from ATP to specific tyrosine residue of GlnA, thus reducing its activity. Conversely, when nitrogen levels are low, the N-terminal adenylyl removase (AR) activates GlnA by removing the adenylyl group by phosphorolysis, increasing its activity. The regulatory region of GlnE binds the signal transduction protein PII (GlnB) which indicates the nitrogen status of the cell. The sequence is that of Bifunctional glutamine synthetase adenylyltransferase/adenylyl-removing enzyme from Proteus mirabilis (strain HI4320).